A 264-amino-acid chain; its full sequence is Ribosomal protein L11 methyltransferase (264 aa).

S-adenosyl-L-methionine is bound by residues T116, G137, D159, and N200.

The protein belongs to the methyltransferase superfamily. PrmA family.

It is found in the cytoplasm. It catalyses the reaction L-lysyl-[protein] + 3 S-adenosyl-L-methionine = N(6),N(6),N(6)-trimethyl-L-lysyl-[protein] + 3 S-adenosyl-L-homocysteine + 3 H(+). Methylates ribosomal protein L11. This chain is Ribosomal protein L11 methyltransferase, found in Thermotoga neapolitana.